The following is a 163-amino-acid chain: Endoribonuclease YbeY (163 aa).

Zn(2+) contacts are provided by His121, His125, and His131.

The protein belongs to the endoribonuclease YbeY family. Requires Zn(2+) as cofactor.

It localises to the cytoplasm. Functionally, single strand-specific metallo-endoribonuclease involved in late-stage 70S ribosome quality control and in maturation of the 3' terminus of the 16S rRNA. The sequence is that of Endoribonuclease YbeY from Synechococcus sp. (strain JA-3-3Ab) (Cyanobacteria bacterium Yellowstone A-Prime).